Here is a 265-residue protein sequence, read N- to C-terminus: 5'-nucleotidase SurE (265 aa).

Positions 8, 9, 39, and 96 each coordinate a divalent metal cation.

This sequence belongs to the SurE nucleotidase family. Requires a divalent metal cation as cofactor.

It is found in the cytoplasm. It carries out the reaction a ribonucleoside 5'-phosphate + H2O = a ribonucleoside + phosphate. Functionally, nucleotidase that shows phosphatase activity on nucleoside 5'-monophosphates. The protein is 5'-nucleotidase SurE of Dehalococcoides mccartyi (strain CBDB1).